Reading from the N-terminus, the 165-residue chain is Zinc finger C2H2 protein ECU11_0990 (165 aa).

Composition is skewed to basic and acidic residues over residues 1-10 (MEAESPKERV) and 19-32 (DPER…DTSS). Residues 1 to 38 (MEAESPKERVQGVSGESWDPERGVKEREDTSSKKGKGV) form a disordered region. 2 C2H2-type zinc fingers span residues 103 to 125 (FGCE…KAQH) and 136 to 158 (LFCP…SRYH).

This chain is Zinc finger C2H2 protein ECU11_0990, found in Encephalitozoon cuniculi (strain GB-M1) (Microsporidian parasite).